A 1663-amino-acid polypeptide reads, in one-letter code: Cortactin-binding protein 2 (1663 aa).

Disordered stretches follow at residues 1 to 26 (MATD…TAEA), 203 to 225 (KKKT…DMEA), 359 to 440 (QASH…LHPG), 454 to 478 (GNAN…SPTS), and 497 to 615 (SRFT…PPKP). Residues 119–276 (RKMQERMSTQ…EQLKRGSDSK (158 aa)) adopt a coiled-coil conformation. Composition is skewed to polar residues over residues 385–396 (GPSTDSAPDLTN) and 418–435 (QSHS…SANA). Arginine 498 is modified (asymmetric dimethylarginine). Over residues 606–615 (PTTPQLPPKP) the composition is skewed to pro residues. 6 ANK repeats span residues 709–739 (GRPT…DINY), 743–772 (DGHS…QVDA), 776–805 (NGFT…DINH), 809–838 (GGQT…DRSV), 842–871 (DGWT…PARG), and 912–942 (EGWT…EPDR). Positions 1449–1490 (KGENGTWRKVSTSPRKKSGHFSSPTWNKPDLNEEGIRNTTTS) are disordered. Serine 1524 bears the Phosphoserine mark. Residues 1579–1663 (VSEKEVSPLS…KNEQVEKPNK (85 aa)) are disordered. The span at 1586-1595 (PLSSHQTTEC) shows a compositional bias: polar residues. A compositionally biased stretch (low complexity) spans 1624-1638 (SQNTKRSSSSSNTRQ). A compositionally biased stretch (basic and acidic residues) spans 1645–1663 (SKEEIWNLHKNEQVEKPNK).

As to quaternary structure, interacts with CTTN/cortactin SH3 domain. Interacts with STRN, STRN4/zinedin and MOB4/phocein; this interactions mediate the association with the STRIPAK core complex and may regulate dendritic spine distribution of the STRIPAK complex in hippocampal neurons. Activation of glutamate receptors weakens the interaction with STRN and STRN4.

Its subcellular location is the cytoplasm. It localises to the cell cortex. It is found in the cell projection. The protein localises to the dendritic spine. Functionally, regulates the dendritic spine distribution of CTTN/cortactin in hippocampal neurons, and thus controls dendritic spinogenesis and dendritic spine maintenance. Associates with the striatin-interacting phosphatase and kinase (STRIPAK) core complex to regulate dendritic spine distribution of the STRIPAK complex in hippocampal neurons. The sequence is that of Cortactin-binding protein 2 (CTTNBP2) from Rhinolophus ferrumequinum (Greater horseshoe bat).